Here is a 723-residue protein sequence, read N- to C-terminus: Catalase-peroxidase (723 aa).

A cross-link (tryptophyl-tyrosyl-methioninium (Trp-Tyr) (with M-250)) is located at residues 96–224; sequence WHAAGSYRVA…LAAVMMGLIY (129 aa). H97 functions as the Proton acceptor in the catalytic mechanism. Positions 224–250 form a cross-link, tryptophyl-tyrosyl-methioninium (Tyr-Met) (with W-96); it reads YVNPEGVDGQPDPLKTAQDVRVTFARM. H265 lines the heme b pocket.

This sequence belongs to the peroxidase family. Peroxidase/catalase subfamily. As to quaternary structure, homodimer or homotetramer. Heme b serves as cofactor. Post-translationally, formation of the three residue Trp-Tyr-Met cross-link is important for the catalase, but not the peroxidase activity of the enzyme.

It catalyses the reaction H2O2 + AH2 = A + 2 H2O. It carries out the reaction 2 H2O2 = O2 + 2 H2O. Functionally, bifunctional enzyme with both catalase and broad-spectrum peroxidase activity. The chain is Catalase-peroxidase from Leptothrix cholodnii (strain ATCC 51168 / LMG 8142 / SP-6) (Leptothrix discophora (strain SP-6)).